The sequence spans 458 residues: Purple acid phosphatase 23 (458 aa).

The first 19 residues, 1–19 (MTLLIMITLTSISLLLAAA), serve as a signal peptide directing secretion. N-linked (GlcNAc...) asparagine glycans are attached at residues N59, N121, and N136. D194 serves as a coordination point for Fe cation. Residue N200 is glycosylated (N-linked (GlcNAc...) asparagine). The Fe cation site is built by D221 and Y224. D221 serves as a coordination point for Mn(2+). N278 lines the Mn(2+) pocket. N278 is a substrate binding site. The N-linked (GlcNAc...) asparagine glycan is linked to N331. H360 provides a ligand contact to Mn(2+). The active-site Proton donor is H370. Residue H397 coordinates Mn(2+). 397 to 399 (HVH) is a substrate binding site. H399 provides a ligand contact to Fe cation. N-linked (GlcNAc...) asparagine glycans are attached at residues N409 and N455.

It belongs to the metallophosphoesterase superfamily. Purple acid phosphatase family. In terms of assembly, homodimer. It depends on Fe cation as a cofactor. Mn(2+) serves as cofactor. As to expression, specifically expressed in flowers.

The protein localises to the secreted. It catalyses the reaction a phosphate monoester + H2O = an alcohol + phosphate. In terms of biological role, acid phosphatase activity with ATP, ADP, dATP, pyrophosphate, polyphosphate, phosphoserine and phosphothreonine. Low or no activity with phosphotyrosine, AMP and phytate. The sequence is that of Purple acid phosphatase 23 (PAP23) from Arabidopsis thaliana (Mouse-ear cress).